The chain runs to 816 residues: Neuroligin-4, X-linked (816 aa).

Residues 1–41 form the signal peptide; it reads MSRPQGLLWLPLLFTPVCVMLNSNVLLWLTALAIKFTLIDS. Over 42-676 the chain is Extracellular; it reads QAQYPVVNTN…TKRDYSTELS (635 aa). Asn102 carries N-linked (GlcNAc...) asparagine glycosylation. 2 disulfides stabilise this stretch: Cys110-Cys146 and Cys306-Cys317. The interval 359 to 364 is interaction with NRXN1; that stretch reads QGEFLN. Cys476 and Cys510 are joined by a disulfide. Asn511 is a glycosylation site (N-linked (GlcNAc...) asparagine). Residues 636–659 form a disordered region; sequence TKRPAITPANNPKHSKDPHKTGPE. Residues 649–658 are compositionally biased toward basic and acidic residues; it reads HSKDPHKTGP. The chain crosses the membrane as a helical span at residues 677 to 697; the sequence is VTIAVGASLLFLNILAFAALY. Residues 698-816 lie on the Cytoplasmic side of the membrane; it reads YKKDKRRHET…LPHGHSTTRV (119 aa). Ser712 carries the phosphoserine modification.

Belongs to the type-B carboxylesterase/lipase family. In terms of assembly, homodimer. Interacts with NRXN1 in a calcium-dependent manner. Interaction with neurexins is mediated by heparan sulfate glycan modification on neurexin. Interacts through its C-terminus with DLG4/PSD-95 third PDZ domain. In terms of tissue distribution, expressed at highest levels in heart. Expressed at lower levels in liver, skeletal muscle and pancreas and at very low levels in brain.

It is found in the cell membrane. The protein localises to the postsynaptic density membrane. Cell surface protein involved in cell-cell-interactions via its interactions with neurexin family members. This Homo sapiens (Human) protein is Neuroligin-4, X-linked (NLGN4X).